Reading from the N-terminus, the 160-residue chain is uncharacterized protein (160 aa).

The N-terminal stretch at 1-25 (MKVTLLLLLIAVLLLLLIFMKVCKQ) is a signal peptide.

This is an uncharacterized protein from Invertebrate iridescent virus 6 (IIV-6).